The sequence spans 293 residues: Taste receptor type 2 member 143 (293 aa).

At 1–6 (MPSTPT) the chain is on the extracellular side. A helical membrane pass occupies residues 7–27 (LIFIIIFYLVSLASMLQNGFM). At 28 to 55 (MIVLGREWMRNRTLPAADMIVASLASSR) the chain is on the cytoplasmic side. A helical membrane pass occupies residues 56 to 76 (FCLHGIAILANLLASFDFCYQ). The Extracellular segment spans residues 77-79 (ANL). A helical transmembrane segment spans residues 80 to 100 (IGILWDFTNTLIFWLTAWLAI). The Cytoplasmic segment spans residues 101-127 (FYCVKISSFSHPVLFWLKWRISQLVPR). Residues 128–148 (LLVVSLIIGGLSAVISATGNF) form a helical membrane-spanning segment. Topologically, residues 149–181 (MANQMTISQGFHGNCTFGHMSLDFYRYYYLYHS) are extracellular. N-linked (GlcNAc...) asparagine glycosylation is present at Asn162. A helical membrane pass occupies residues 182–202 (VLMWFTPFFLFLVSVIVLMFS). Over 203–227 (LYQHVEKMRGHRPGPWDLHTQAHTM) the chain is Cytoplasmic. A helical transmembrane segment spans residues 228 to 248 (ALKSLTFFFIFYIFFFLALVI). The Extracellular segment spans residues 249-264 (SSTKRKSMQSYYWARE). The helical transmembrane segment at 265 to 285 (AIIYTGIFLNSIILLFSNPKL) threads the bilayer. Residues 286 to 293 (RKALKMRF) are Cytoplasmic-facing.

Belongs to the G-protein coupled receptor T2R family.

The protein localises to the membrane. Its function is as follows. Putative taste receptor which may play a role in the perception of bitterness. The sequence is that of Taste receptor type 2 member 143 (Tas2r143) from Mus musculus (Mouse).